We begin with the raw amino-acid sequence, 371 residues long: tRNA-specific 2-thiouridylase MnmA (371 aa).

Residues 13–20 and Met-39 contribute to the ATP site; that span reads GMSGGVDS. The interval 99–101 is interaction with target base in tRNA; the sequence is NPD. Cys-104 functions as the Nucleophile in the catalytic mechanism. Cys-104 and Cys-200 are oxidised to a cystine. Gly-128 contributes to the ATP binding site. Positions 150-152 are interaction with tRNA; sequence KDQ. Cys-200 functions as the Cysteine persulfide intermediate in the catalytic mechanism. The interval 309 to 310 is interaction with tRNA; it reads RY.

Belongs to the MnmA/TRMU family.

It localises to the cytoplasm. It catalyses the reaction S-sulfanyl-L-cysteinyl-[protein] + uridine(34) in tRNA + AH2 + ATP = 2-thiouridine(34) in tRNA + L-cysteinyl-[protein] + A + AMP + diphosphate + H(+). In terms of biological role, catalyzes the 2-thiolation of uridine at the wobble position (U34) of tRNA, leading to the formation of s(2)U34. In Bacillus velezensis (strain DSM 23117 / BGSC 10A6 / LMG 26770 / FZB42) (Bacillus amyloliquefaciens subsp. plantarum), this protein is tRNA-specific 2-thiouridylase MnmA.